Here is an 866-residue protein sequence, read N- to C-terminus: Putative linoleate 9S-lipoxygenase 3 (866 aa).

The region spanning 33-161 (NDFGATVIDG…KYRYDRVFFA (129 aa)) is the PLAT domain. A Lipoxygenase domain is found at 164–866 (AYLPSQMPAA…AKGIPNSISI (703 aa)). A disordered region spans residues 206–250 (YNDLGSPDSGNPRPILGGSPDTPYPRRGRTGRKPTTTDPDSESRL). The Fe cation site is built by histidine 521, histidine 526, histidine 712, asparagine 716, and isoleucine 866.

The protein belongs to the lipoxygenase family. It depends on Fe cation as a cofactor.

It catalyses the reaction (9Z,12Z)-octadecadienoate + O2 = (9S)-hydroperoxy-(10E,12Z)-octadecadienoate. The protein operates within lipid metabolism; oxylipin biosynthesis. In terms of biological role, plant lipoxygenase may be involved in a number of diverse aspects of plant physiology including growth and development, pest resistance, and senescence or responses to wounding. Catalyzes the hydroperoxidation of lipids containing a cis,cis-1,4-pentadiene structure. This is Putative linoleate 9S-lipoxygenase 3 from Oryza sativa subsp. japonica (Rice).